The following is a 234-amino-acid chain: Enolase-phosphatase E1 (234 aa).

The segment at 212–234 (RPGNYPQPQHSHFKISSFEGLNP) is disordered.

This sequence belongs to the HAD-like hydrolase superfamily. MasA/MtnC family. As to quaternary structure, monomer. The cofactor is Mg(2+).

It carries out the reaction 5-methylsulfanyl-2,3-dioxopentyl phosphate + H2O = 1,2-dihydroxy-5-(methylsulfanyl)pent-1-en-3-one + phosphate. It functions in the pathway amino-acid biosynthesis; L-methionine biosynthesis via salvage pathway; L-methionine from S-methyl-5-thio-alpha-D-ribose 1-phosphate: step 3/6. It participates in amino-acid biosynthesis; L-methionine biosynthesis via salvage pathway; L-methionine from S-methyl-5-thio-alpha-D-ribose 1-phosphate: step 4/6. Functionally, bifunctional enzyme that catalyzes the enolization of 2,3-diketo-5-methylthiopentyl-1-phosphate (DK-MTP-1-P) into the intermediate 2-hydroxy-3-keto-5-methylthiopentenyl-1-phosphate (HK-MTPenyl-1-P), which is then dephosphorylated to form the acireductone 1,2-dihydroxy-3-keto-5-methylthiopentene (DHK-MTPene). This Leptospira interrogans serogroup Icterohaemorrhagiae serovar copenhageni (strain Fiocruz L1-130) protein is Enolase-phosphatase E1.